Here is a 134-residue protein sequence, read N- to C-terminus: Aspartate 1-decarboxylase (134 aa).

Residue Ser-25 is the Schiff-base intermediate with substrate; via pyruvic acid of the active site. The residue at position 25 (Ser-25) is a Pyruvic acid (Ser). Substrate is bound at residue Thr-57. The active-site Proton donor is the Tyr-58. 73-75 (GAA) lines the substrate pocket.

It belongs to the PanD family. As to quaternary structure, heterooctamer of four alpha and four beta subunits. Pyruvate serves as cofactor. Is synthesized initially as an inactive proenzyme, which is activated by self-cleavage at a specific serine bond to produce a beta-subunit with a hydroxyl group at its C-terminus and an alpha-subunit with a pyruvoyl group at its N-terminus.

It is found in the cytoplasm. It carries out the reaction L-aspartate + H(+) = beta-alanine + CO2. It participates in cofactor biosynthesis; (R)-pantothenate biosynthesis; beta-alanine from L-aspartate: step 1/1. Functionally, catalyzes the pyruvoyl-dependent decarboxylation of aspartate to produce beta-alanine. This Citrifermentans bemidjiense (strain ATCC BAA-1014 / DSM 16622 / JCM 12645 / Bem) (Geobacter bemidjiensis) protein is Aspartate 1-decarboxylase.